A 117-amino-acid polypeptide reads, in one-letter code: UPF0342 protein OB1136 (117 aa).

It belongs to the UPF0342 family.

The protein is UPF0342 protein OB1136 of Oceanobacillus iheyensis (strain DSM 14371 / CIP 107618 / JCM 11309 / KCTC 3954 / HTE831).